A 208-amino-acid chain; its full sequence is Large ribosomal subunit protein uL3 (208 aa).

Residues Gly130–Ser168 form a disordered region.

It belongs to the universal ribosomal protein uL3 family. As to quaternary structure, part of the 50S ribosomal subunit. Forms a cluster with proteins L14 and L19.

One of the primary rRNA binding proteins, it binds directly near the 3'-end of the 23S rRNA, where it nucleates assembly of the 50S subunit. The chain is Large ribosomal subunit protein uL3 from Chloroherpeton thalassium (strain ATCC 35110 / GB-78).